The following is a 244-amino-acid chain: Methanethiol S-methyltransferase (244 aa).

5 helical membrane passes run 7–27 (IIYGAASYLVFLVAFGYAIGF), 41–61 (IAAPIGQAVVVNLVLLGVFAV), 90–110 (LLASVALLLLYWQWRTMPAVI), 120–140 (VALWALFWLGWATVLTSTFMI), and 181–201 (GFVVAFWATPMMTAGHLLFAI).

It belongs to the nurim family.

It localises to the membrane. The catalysed reaction is methanethiol + S-adenosyl-L-methionine = dimethyl sulfide + S-adenosyl-L-homocysteine + H(+). In terms of biological role, catalyzes the methylation of methanethiol (MeSH) to yield dimethylsulphide (DMS). The polypeptide is Methanethiol S-methyltransferase (Mycobacterium tuberculosis (strain ATCC 25618 / H37Rv)).